We begin with the raw amino-acid sequence, 329 residues long: Thioredoxin-like fold domain-containing protein MRL7L homolog, chloroplastic (329 aa).

Residues 1–46 (MALQSCCSSSASVPATCSALCLAEATRAASLFVRPRAAARRLVLAR) constitute a chloroplast transit peptide. Residues 58-91 (AVQLVLGGRARDDGSESESSDDEDDDEPMQMTDE) form a disordered region. Acidic residues predominate over residues 72-85 (SESESSDDEDDDEP).

It localises to the plastid. The protein localises to the chloroplast stroma. Its function is as follows. Plays an essential role in early steps of chloroplast development. Involved in the regulation of plastid gene expression. Required for the proper function of the plastid transcriptional machinery and protein accumulation in thylakoid membranes. May function as molecular chaperone to ensure proper organization of the nucleoids in chloroplasts. This is Thioredoxin-like fold domain-containing protein MRL7L homolog, chloroplastic from Oryza sativa subsp. japonica (Rice).